The chain runs to 292 residues: 1D-myo-inositol 2-acetamido-2-deoxy-alpha-D-glucopyranoside deacetylase (292 aa).

3 residues coordinate Zn(2+): His-12, Asp-15, and His-147.

The protein belongs to the MshB deacetylase family. The cofactor is Zn(2+).

It carries out the reaction 1D-myo-inositol 2-acetamido-2-deoxy-alpha-D-glucopyranoside + H2O = 1D-myo-inositol 2-amino-2-deoxy-alpha-D-glucopyranoside + acetate. Catalyzes the deacetylation of 1D-myo-inositol 2-acetamido-2-deoxy-alpha-D-glucopyranoside (GlcNAc-Ins) in the mycothiol biosynthesis pathway. This Rhodococcus jostii (strain RHA1) protein is 1D-myo-inositol 2-acetamido-2-deoxy-alpha-D-glucopyranoside deacetylase.